The primary structure comprises 404 residues: Corticosteroid-binding globulin (404 aa).

The first 22 residues, 1–22 (MLPTLYTCLLWLSTSGLWTVQA), serve as a signal peptide directing secretion. N-linked (GlcNAc...) asparagine glycans are attached at residues asparagine 95, asparagine 119, and asparagine 175. Glutamine 253 is a cortisol binding site. Asparagine 259 carries an N-linked (GlcNAc...) asparagine glycan. Position 285 (glutamine 285) interacts with cortisol. Residue asparagine 326 is glycosylated (N-linked (GlcNAc...) asparagine). Residue tryptophan 392 participates in cortisol binding.

The protein belongs to the serpin family. Post-translationally, glycosylation in position Asn-259 is needed for steroid binding.

The protein resides in the secreted. Its function is as follows. Major transport protein for glucocorticoids and progestins in the blood of almost all vertebrate species. The polypeptide is Corticosteroid-binding globulin (SERPINA6) (Bos taurus (Bovine)).